Reading from the N-terminus, the 255-residue chain is 5-oxoprolinase subunit A (255 aa).

The protein belongs to the LamB/PxpA family. Forms a complex composed of PxpA, PxpB and PxpC.

The enzyme catalyses 5-oxo-L-proline + ATP + 2 H2O = L-glutamate + ADP + phosphate + H(+). In terms of biological role, catalyzes the cleavage of 5-oxoproline to form L-glutamate coupled to the hydrolysis of ATP to ADP and inorganic phosphate. The polypeptide is 5-oxoprolinase subunit A (Pyrococcus furiosus (strain ATCC 43587 / DSM 3638 / JCM 8422 / Vc1)).